A 178-amino-acid chain; its full sequence is Protein 105R (178 aa).

The first 18 residues, 1 to 18 (MYFLFFFLLFLFPVGVKG), serve as a signal peptide directing secretion.

In Pantherophis guttatus (Corn snake), this protein is Protein 105R.